Consider the following 567-residue polypeptide: Urease subunit alpha (567 aa).

A Urease domain is found at 129–567; that stretch reads GGVDTHIHFI…LPMAQRYFLF (439 aa). Residues H134, H136, and K217 each contribute to the Ni(2+) site. Position 217 is an N6-carboxylysine (K217). A substrate-binding site is contributed by H219. Ni(2+) is bound by residues H246 and H272. The active-site Proton donor is the H320. D360 contributes to the Ni(2+) binding site.

The protein belongs to the metallo-dependent hydrolases superfamily. Urease alpha subunit family. Heterotrimer of UreA (gamma), UreB (beta) and UreC (alpha) subunits. Three heterotrimers associate to form the active enzyme. It depends on Ni cation as a cofactor. Carboxylation allows a single lysine to coordinate two nickel ions.

The protein resides in the cytoplasm. It catalyses the reaction urea + 2 H2O + H(+) = hydrogencarbonate + 2 NH4(+). It functions in the pathway nitrogen metabolism; urea degradation; CO(2) and NH(3) from urea (urease route): step 1/1. The polypeptide is Urease subunit alpha (Aliivibrio fischeri (strain MJ11) (Vibrio fischeri)).